The following is a 75-amino-acid chain: DNA-directed RNA polymerase subunit omega (75 aa).

The protein belongs to the RNA polymerase subunit omega family. In cyanobacteria the RNAP catalytic core is composed of 2 alpha, 1 beta, 1 beta', 1 gamma and 1 omega subunit. When a sigma factor is associated with the core the holoenzyme is formed, which can initiate transcription.

The catalysed reaction is RNA(n) + a ribonucleoside 5'-triphosphate = RNA(n+1) + diphosphate. Promotes RNA polymerase assembly. Latches the N- and C-terminal regions of the beta' subunit thereby facilitating its interaction with the beta and alpha subunits. The protein is DNA-directed RNA polymerase subunit omega of Synechococcus sp. (strain CC9311).